The primary structure comprises 205 residues: Holliday junction branch migration complex subunit RuvA (205 aa).

Positions 1–65 (MIGRLRGAVA…SAGLRLYGFL (65 aa)) are domain I. Residues 66–144 (TREDRRAFVL…TDGPVLMSAP (79 aa)) are domain II. Residues 145-153 (TSSAPSAPA) are flexible linker. The tract at residues 153–205 (AKPAPTGDAVAALMGLGVAEVNARRVVEAAAAELGEEATVQALIKAGLKELGR) is domain III.

It belongs to the RuvA family. In terms of assembly, homotetramer. Forms an RuvA(8)-RuvB(12)-Holliday junction (HJ) complex. HJ DNA is sandwiched between 2 RuvA tetramers; dsDNA enters through RuvA and exits via RuvB. An RuvB hexamer assembles on each DNA strand where it exits the tetramer. Each RuvB hexamer is contacted by two RuvA subunits (via domain III) on 2 adjacent RuvB subunits; this complex drives branch migration. In the full resolvosome a probable DNA-RuvA(4)-RuvB(12)-RuvC(2) complex forms which resolves the HJ.

It localises to the cytoplasm. Its function is as follows. The RuvA-RuvB-RuvC complex processes Holliday junction (HJ) DNA during genetic recombination and DNA repair, while the RuvA-RuvB complex plays an important role in the rescue of blocked DNA replication forks via replication fork reversal (RFR). RuvA specifically binds to HJ cruciform DNA, conferring on it an open structure. The RuvB hexamer acts as an ATP-dependent pump, pulling dsDNA into and through the RuvAB complex. HJ branch migration allows RuvC to scan DNA until it finds its consensus sequence, where it cleaves and resolves the cruciform DNA. The sequence is that of Holliday junction branch migration complex subunit RuvA from Caulobacter vibrioides (strain ATCC 19089 / CIP 103742 / CB 15) (Caulobacter crescentus).